Reading from the N-terminus, the 540-residue chain is MAKIIAFDEEARRGLERGMNQLADAVKVTLGPKGRNVVLEKKWGAPTITNDGVSIAKEIELEDPYEKIGAELVKEVAKKTDDVAGDGTTTATVLAQALVREGLRNVAAGANPMALKRGIEKAVEAVSSALLEQAKDVETKEQIASTASISAADTQIGELIAEAMDKVGKEGVITVEESQTFGLELELTEGMRFDKGYISAYFATDMERMEASLDDPYILIVNSKIGNVKDLLPLLEKVMQSGKPLLIIAEDVEGEALSTLVVNKIRGTFKSVAVKAPGFGDRRKAMLGDIAILTGGTVISEEVGLKLENAGLDLLGRARKVVITKDETTIVDGAGDTDQVNGRVAQIRAEIENSDSDYDREKLQERLANVAGGVAVIKAGAATEVELKERKHRIEDAVRNAKAAVEEGIVAGGGVALLQASSVFEKLELEGDEATGAAAVKLALEAPLKQIAVNGGLEGGVVVEKVRNLSVGHGLNAATGQYVDMIAEGILDPAKVTRSALQNAASIAALFLTTEAVIADKPEKAAAAAPGGMPGGDMDF.

Residues 29-32 (TLGP), 86-90 (DGTTT), G413, 476-478 (NAA), and D492 contribute to the ATP site.

This sequence belongs to the chaperonin (HSP60) family. As to quaternary structure, forms a cylinder of 14 subunits composed of two heptameric rings stacked back-to-back. Interacts with the co-chaperonin GroES.

It is found in the cytoplasm. It catalyses the reaction ATP + H2O + a folded polypeptide = ADP + phosphate + an unfolded polypeptide.. In terms of biological role, together with its co-chaperonin GroES, plays an essential role in assisting protein folding. The GroEL-GroES system forms a nano-cage that allows encapsulation of the non-native substrate proteins and provides a physical environment optimized to promote and accelerate protein folding. The polypeptide is Chaperonin GroEL 2 (Streptomyces albus G).